Here is a 185-residue protein sequence, read N- to C-terminus: MATTTTPRLKTKYREEIAGKLREEFSYENVMQIPGLVKIVVNMGVGDAARDSKLIEGAIRDLTTITGQKPAVTKARKSIAQFKLREGQPIGAHVTLRGDRMWEFLDRTLSLALPRIRDFRGLSPKQFDGRGNYTFGLTEQVMFHEIDQDKIDRTRGMDITVVTTATNDAEGRALLRHLGFPFKEA.

This sequence belongs to the universal ribosomal protein uL5 family. In terms of assembly, part of the 50S ribosomal subunit; part of the 5S rRNA/L5/L18/L25 subcomplex. Contacts the 5S rRNA and the P site tRNA. Forms a bridge to the 30S subunit in the 70S ribosome.

Functionally, this is one of the proteins that bind and probably mediate the attachment of the 5S RNA into the large ribosomal subunit, where it forms part of the central protuberance. In the 70S ribosome it contacts protein S13 of the 30S subunit (bridge B1b), connecting the 2 subunits; this bridge is implicated in subunit movement. Contacts the P site tRNA; the 5S rRNA and some of its associated proteins might help stabilize positioning of ribosome-bound tRNAs. The protein is Large ribosomal subunit protein uL5 of Streptomyces coelicolor (strain ATCC BAA-471 / A3(2) / M145).